We begin with the raw amino-acid sequence, 199 residues long: Pyridoxine/pyridoxamine 5'-phosphate oxidase (199 aa).

FMN-binding positions include 44-49 (RTVLLK), 59-60 (YS), Lys66, and Gln91. Lys49 lines the substrate pocket. The substrate site is built by Tyr109, Arg113, and Ser117. FMN is bound by residues 126 to 127 (QS) and Trp171. Position 177 to 179 (177 to 179 (RLH)) interacts with substrate. Residue Arg181 coordinates FMN.

This sequence belongs to the pyridoxamine 5'-phosphate oxidase family. As to quaternary structure, homodimer. Requires FMN as cofactor.

The enzyme catalyses pyridoxamine 5'-phosphate + O2 + H2O = pyridoxal 5'-phosphate + H2O2 + NH4(+). The catalysed reaction is pyridoxine 5'-phosphate + O2 = pyridoxal 5'-phosphate + H2O2. The protein operates within cofactor metabolism; pyridoxal 5'-phosphate salvage; pyridoxal 5'-phosphate from pyridoxamine 5'-phosphate: step 1/1. It functions in the pathway cofactor metabolism; pyridoxal 5'-phosphate salvage; pyridoxal 5'-phosphate from pyridoxine 5'-phosphate: step 1/1. Functionally, catalyzes the oxidation of either pyridoxine 5'-phosphate (PNP) or pyridoxamine 5'-phosphate (PMP) into pyridoxal 5'-phosphate (PLP). The sequence is that of Pyridoxine/pyridoxamine 5'-phosphate oxidase from Xanthomonas oryzae pv. oryzae (strain KACC10331 / KXO85).